Here is a 384-residue protein sequence, read N- to C-terminus: S-adenosylmethionine synthase (384 aa).

H15 is an ATP binding site. A Mg(2+)-binding site is contributed by D17. E43 is a K(+) binding site. Residues E56 and Q99 each contribute to the L-methionine site. Residues 99-109 (QSPDINQGVDR) are flexible loop. ATP is bound by residues 164 to 166 (DAK), 230 to 231 (RF), D239, 245 to 246 (RK), A262, and K266. L-methionine is bound at residue D239. K270 lines the L-methionine pocket.

The protein belongs to the AdoMet synthase family. As to quaternary structure, homotetramer; dimer of dimers. The cofactor is Mg(2+). K(+) is required as a cofactor.

The protein resides in the cytoplasm. The enzyme catalyses L-methionine + ATP + H2O = S-adenosyl-L-methionine + phosphate + diphosphate. It participates in amino-acid biosynthesis; S-adenosyl-L-methionine biosynthesis; S-adenosyl-L-methionine from L-methionine: step 1/1. In terms of biological role, catalyzes the formation of S-adenosylmethionine (AdoMet) from methionine and ATP. The overall synthetic reaction is composed of two sequential steps, AdoMet formation and the subsequent tripolyphosphate hydrolysis which occurs prior to release of AdoMet from the enzyme. The polypeptide is S-adenosylmethionine synthase (Serratia proteamaculans (strain 568)).